The sequence spans 431 residues: Tol-Pal system protein TolB (431 aa).

Residues 1-26 (MSLMTKLGFRALVASCLITAGSAANA) form the signal peptide. Residues 406–431 (DGSAPPQILSVQGGSVREPSWGPFMQ) form a disordered region.

It belongs to the TolB family. As to quaternary structure, the Tol-Pal system is composed of five core proteins: the inner membrane proteins TolA, TolQ and TolR, the periplasmic protein TolB and the outer membrane protein Pal. They form a network linking the inner and outer membranes and the peptidoglycan layer.

It is found in the periplasm. In terms of biological role, part of the Tol-Pal system, which plays a role in outer membrane invagination during cell division and is important for maintaining outer membrane integrity. The protein is Tol-Pal system protein TolB of Burkholderia orbicola (strain AU 1054).